We begin with the raw amino-acid sequence, 152 residues long: Transcriptional repressor NrdR (152 aa).

Residues 3–34 fold into a zinc finger; sequence CPHCHHNGSRVIDSRPAEDGMSIRRRRECVNC. The ATP-cone domain maps to 49–139; that stretch reads LLVVKKDGTR…VYRQFKDVDA (91 aa).

It belongs to the NrdR family. Zn(2+) serves as cofactor.

Functionally, negatively regulates transcription of bacterial ribonucleotide reductase nrd genes and operons by binding to NrdR-boxes. In Limosilactobacillus fermentum (strain NBRC 3956 / LMG 18251) (Lactobacillus fermentum), this protein is Transcriptional repressor NrdR.